The sequence spans 101 residues: Replication restart protein PriB (101 aa).

In terms of domain architecture, SSB spans 1–101 (MTTNNLVLSG…IHAENVELKT (101 aa)).

Belongs to the PriB family. Homodimer. Interacts with PriA and DnaT. Component of the replication restart primosome. Primosome assembly occurs via a 'hand-off' mechanism. PriA binds to replication forks, subsequently PriB then DnaT bind; DnaT then displaces ssDNA to generate the helicase loading substrate.

Its function is as follows. Involved in the restart of stalled replication forks, which reloads the replicative helicase on sites other than the origin of replication; the PriA-PriB pathway is the major replication restart pathway. During primosome assembly it facilitates complex formation between PriA and DnaT on DNA; stabilizes PriA on DNA. Stimulates the DNA unwinding activity of PriA helicase. This Shewanella baltica (strain OS223) protein is Replication restart protein PriB.